Here is a 261-residue protein sequence, read N- to C-terminus: Major biofilm matrix component (261 aa).

The first 27 residues, 1 to 27 (MGMKKKLSLGVASAALGLALVGGGTWA), serve as a signal peptide directing secretion. Positions 241–261 (DHTDKDGYVKENEKAHSEDKN) are disordered.

Belongs to the peptidase M73 family. Forms fibers. Fibers have variable length and are 10-15 nm width. Interacts with obg (AC P20964) in pull-down experiments.

It localises to the secreted. The protein localises to the forespore intermembrane space. In terms of biological role, tasA is the major protein component of the biofilm extracellular matrix. It forms amyloid fibers that bind cells together in the biofilm. Exhibits an antibacterial activity against a variety of Gram-positive and Gram-negative bacteria. In laboratory strains, is also involved in proper spore coat assembly. The polypeptide is Major biofilm matrix component (Bacillus subtilis (strain 168)).